Consider the following 195-residue polypeptide: Imidazoleglycerol-phosphate dehydratase (195 aa).

It belongs to the imidazoleglycerol-phosphate dehydratase family.

Its subcellular location is the cytoplasm. It carries out the reaction D-erythro-1-(imidazol-4-yl)glycerol 3-phosphate = 3-(imidazol-4-yl)-2-oxopropyl phosphate + H2O. The protein operates within amino-acid biosynthesis; L-histidine biosynthesis; L-histidine from 5-phospho-alpha-D-ribose 1-diphosphate: step 6/9. The sequence is that of Imidazoleglycerol-phosphate dehydratase from Exiguobacterium sp. (strain ATCC BAA-1283 / AT1b).